The primary structure comprises 348 residues: Ubiquitin thioesterase OTU1 (348 aa).

The span at M1 to G11 shows a compositional bias: basic residues. Positions M1–V39 are disordered. Positions R50–R128 are UBX-like. An OTU domain is found at L149–N274. Positions V154 to C160 are cys-loop. D157 is a catalytic residue. Catalysis depends on C160, which acts as the Nucleophile. Residues I213–I223 form a variable-loop region. Residues Y263–H267 form a his-loop region. I266 contributes to the substrate binding site. Residue H267 is part of the active site. The S2 site stretch occupies residues D291–Q296. The segment at L318–H342 adopts a C2H2-type zinc-finger fold. H342 is a catalytic residue.

As to quaternary structure, interacts with VCP; the interaction is direct. Interacts with FAF2/UBXD8. Interacts with DERL1; however interaction is dependent on the UBAX-like region, suggesting that it may be indirect. Interacts with PLAA, UBXN6 and VCP; may form a complex involved in macroautophagy.

It is found in the cytoplasm. It carries out the reaction Thiol-dependent hydrolysis of ester, thioester, amide, peptide and isopeptide bonds formed by the C-terminal Gly of ubiquitin (a 76-residue protein attached to proteins as an intracellular targeting signal).. In terms of biological role, hydrolase that can remove conjugated ubiquitin from proteins and participates in endoplasmic reticulum-associated degradation (ERAD) for misfolded lumenal proteins. May act by triming the ubiquitin chain on the associated substrate to facilitate their threading through the VCP/p97 pore. Ubiquitin moieties on substrates may present a steric impediment to the threading process when the substrate is transferred to the VCP pore and threaded through VCP's axial channel. Mediates deubiquitination of 'Lys-27'-, 'Lys-29'- and 'Lys-33'-linked polyubiquitin chains. Also able to hydrolyze 'Lys-11'-linked ubiquitin chains. Cleaves both polyubiquitin and di-ubiquitin. May play a role in macroautophagy, regulating for instance the clearance of damaged lysosomes. May recruit PLAA, UBXN6 and VCP to damaged lysosome membranes decorated with K48-linked ubiquitin chains and remove these chains allowing autophagosome formation. This chain is Ubiquitin thioesterase OTU1 (YOD1), found in Homo sapiens (Human).